The following is a 51-amino-acid chain: Small ribosomal subunit protein eS31 (51 aa).

Cys-22, Cys-25, Cys-40, and Cys-43 together coordinate Zn(2+). Residues 22–43 (CVRCSHGIFMADHGDRYACGRC) form a C4-type zinc finger.

This sequence belongs to the eukaryotic ribosomal protein eS31 family. In terms of assembly, part of the 30S ribosomal subunit. Requires Zn(2+) as cofactor.

The polypeptide is Small ribosomal subunit protein eS31 (Methanosphaera stadtmanae (strain ATCC 43021 / DSM 3091 / JCM 11832 / MCB-3)).